We begin with the raw amino-acid sequence, 151 residues long: RNA polymerase-binding transcription factor DksA (151 aa).

The stretch at 34–54 (EAQLSHFKRILEAWRNQLRDE) forms a coiled coil. Residues C114, C117, C135, and C138 each coordinate Zn(2+). The segment at 114 to 138 (CESCGVEIGIRRLEARPTADLCIDC) adopts a dksA C4-type zinc-finger fold.

Belongs to the DksA family. In terms of assembly, interacts directly with the RNA polymerase.

Its subcellular location is the cytoplasm. Functionally, transcription factor that acts by binding directly to the RNA polymerase (RNAP). Required for negative regulation of rRNA expression and positive regulation of several amino acid biosynthesis promoters. Also required for regulation of fis expression. The polypeptide is RNA polymerase-binding transcription factor DksA (Salmonella typhi).